A 374-amino-acid chain; its full sequence is Chaperone protein DnaJ (374 aa).

A J domain is found at 4-69; sequence SYYEILEITQ…EKRAIYDRYG (66 aa). Residues 136–213 form a CR-type zinc finger; it reads GCKKNIDFTY…CKGLGYNESK (78 aa). Zn(2+) contacts are provided by C149, C152, C165, C168, C187, C190, C201, and C204. CXXCXGXG motif repeat units lie at residues 149–156, 165–172, 187–194, and 201–208; these read CKTCNGTG, CPKCQGRG, CPDCQGSG, and CNDCKGLG.

The protein belongs to the DnaJ family. As to quaternary structure, homodimer. It depends on Zn(2+) as a cofactor.

The protein localises to the cytoplasm. Participates actively in the response to hyperosmotic and heat shock by preventing the aggregation of stress-denatured proteins and by disaggregating proteins, also in an autonomous, DnaK-independent fashion. Unfolded proteins bind initially to DnaJ; upon interaction with the DnaJ-bound protein, DnaK hydrolyzes its bound ATP, resulting in the formation of a stable complex. GrpE releases ADP from DnaK; ATP binding to DnaK triggers the release of the substrate protein, thus completing the reaction cycle. Several rounds of ATP-dependent interactions between DnaJ, DnaK and GrpE are required for fully efficient folding. Also involved, together with DnaK and GrpE, in the DNA replication of plasmids through activation of initiation proteins. The protein is Chaperone protein DnaJ of Campylobacter jejuni subsp. doylei (strain ATCC BAA-1458 / RM4099 / 269.97).